Here is a 213-residue protein sequence, read N- to C-terminus: Probable septum site-determining protein MinC (213 aa).

This sequence belongs to the MinC family. As to quaternary structure, interacts with MinD and FtsZ.

In terms of biological role, cell division inhibitor that blocks the formation of polar Z ring septums. Rapidly oscillates between the poles of the cell to destabilize FtsZ filaments that have formed before they mature into polar Z rings. Prevents FtsZ polymerization. The chain is Probable septum site-determining protein MinC from Pseudothermotoga lettingae (strain ATCC BAA-301 / DSM 14385 / NBRC 107922 / TMO) (Thermotoga lettingae).